A 187-amino-acid chain; its full sequence is NAC domain-containing protein 104 (187 aa).

The NAC domain maps to 3 to 155; the sequence is LPPGFRFFPT…KWVICRVYEQ (153 aa). Residues 94–161 mediate DNA binding; sequence VGIKKYLTFY…VYEQNCSEEE (68 aa). The segment at 118–142 is disordered; that stretch reads LPDSSSSSSRSSKRSSRASSSSHKP.

Expressed in root xylem vessels. Expressed in stems, vascular tissue of cauline leaves and tracheary elements of sepals.

It is found in the nucleus. Probable transcription factor that influences tracheary elements and xylem development by negatively regulating secondary cell wall fiber synthesis and programmed cell death. The sequence is that of NAC domain-containing protein 104 from Arabidopsis thaliana (Mouse-ear cress).